The sequence spans 309 residues: Porphobilinogen deaminase (309 aa).

S-(dipyrrolylmethanemethyl)cysteine is present on C242.

This sequence belongs to the HMBS family. In terms of assembly, monomer. Dipyrromethane is required as a cofactor.

The catalysed reaction is 4 porphobilinogen + H2O = hydroxymethylbilane + 4 NH4(+). It functions in the pathway porphyrin-containing compound metabolism; protoporphyrin-IX biosynthesis; coproporphyrinogen-III from 5-aminolevulinate: step 2/4. In terms of biological role, tetrapolymerization of the monopyrrole PBG into the hydroxymethylbilane pre-uroporphyrinogen in several discrete steps. The protein is Porphobilinogen deaminase of Shewanella woodyi (strain ATCC 51908 / MS32).